A 161-amino-acid polypeptide reads, in one-letter code: Crossover junction endodeoxyribonuclease RuvC (161 aa).

Catalysis depends on residues D7, E67, and D140. Positions 7, 67, and 140 each coordinate Mg(2+).

This sequence belongs to the RuvC family. In terms of assembly, homodimer which binds Holliday junction (HJ) DNA. The HJ becomes 2-fold symmetrical on binding to RuvC with unstacked arms; it has a different conformation from HJ DNA in complex with RuvA. In the full resolvosome a probable DNA-RuvA(4)-RuvB(12)-RuvC(2) complex forms which resolves the HJ. It depends on Mg(2+) as a cofactor.

It localises to the cytoplasm. It carries out the reaction Endonucleolytic cleavage at a junction such as a reciprocal single-stranded crossover between two homologous DNA duplexes (Holliday junction).. Functionally, the RuvA-RuvB-RuvC complex processes Holliday junction (HJ) DNA during genetic recombination and DNA repair. Endonuclease that resolves HJ intermediates. Cleaves cruciform DNA by making single-stranded nicks across the HJ at symmetrical positions within the homologous arms, yielding a 5'-phosphate and a 3'-hydroxyl group; requires a central core of homology in the junction. The consensus cleavage sequence is 5'-(A/T)TT(C/G)-3'. Cleavage occurs on the 3'-side of the TT dinucleotide at the point of strand exchange. HJ branch migration catalyzed by RuvA-RuvB allows RuvC to scan DNA until it finds its consensus sequence, where it cleaves and resolves the cruciform DNA. This Natranaerobius thermophilus (strain ATCC BAA-1301 / DSM 18059 / JW/NM-WN-LF) protein is Crossover junction endodeoxyribonuclease RuvC.